The following is a 313-amino-acid chain: Cytochrome c biogenesis protein CcsA (313 aa).

8 consecutive transmembrane segments (helical) span residues 9-29 (ILTH…LITL), 44-64 (GIIV…ISSG), 71-91 (LYES…IPYF), 101-121 (IIGP…LTEI), 143-163 (MILG…LLVI), 217-237 (VISL…VWAN), 244-264 (WNWD…AIYL), and 278-298 (AIVA…VNLL).

Belongs to the CcmF/CycK/Ccl1/NrfE/CcsA family. May interact with Ccs1.

It is found in the plastid. Its subcellular location is the chloroplast thylakoid membrane. Its function is as follows. Required during biogenesis of c-type cytochromes (cytochrome c6 and cytochrome f) at the step of heme attachment. The polypeptide is Cytochrome c biogenesis protein CcsA (Nicotiana tomentosiformis (Tobacco)).